Consider the following 35-residue polypeptide: Coenzyme PQQ synthesis protein A (35 aa).

Positions 16-20 (EINMY) form a cross-link, pyrroloquinoline quinone (Glu-Tyr).

Belongs to the PqqA family.

It functions in the pathway cofactor biosynthesis; pyrroloquinoline quinone biosynthesis. Its function is as follows. Required for coenzyme pyrroloquinoline quinone (PQQ) biosynthesis. PQQ is probably formed by cross-linking a specific glutamate to a specific tyrosine residue and excising these residues from the peptide. The chain is Coenzyme PQQ synthesis protein A from Ruegeria pomeroyi (strain ATCC 700808 / DSM 15171 / DSS-3) (Silicibacter pomeroyi).